A 421-amino-acid polypeptide reads, in one-letter code: Shaggy-related protein kinase kappa (421 aa).

The span at 1–10 (MASSGLGNGV) shows a compositional bias: gly residues. The segment at 1-60 (MASSGLGNGVGTSRSAKGLKSSSSSVDWLTRDLAETRIRDKVETDDERDSEPDIIDGAGA) is disordered. A compositionally biased stretch (basic and acidic residues) spans 29–42 (LTRDLAETRIRDKV). The segment covering 43-54 (ETDDERDSEPDI) has biased composition (acidic residues). Positions 83–367 (YISEHVVGTG…ALEACIHPLF (285 aa)) constitute a Protein kinase domain. ATP contacts are provided by residues 89 to 97 (VGTGSFGMV) and Lys112. The Proton acceptor role is filled by Asp208. A Phosphotyrosine modification is found at Tyr243.

It belongs to the protein kinase superfamily. CMGC Ser/Thr protein kinase family. GSK-3 subfamily. In terms of processing, autophosphorylated mainly on threonine and serine residues. As to expression, expressed exclusively in inflorescences.

The catalysed reaction is L-seryl-[protein] + ATP = O-phospho-L-seryl-[protein] + ADP + H(+). It catalyses the reaction L-threonyl-[protein] + ATP = O-phospho-L-threonyl-[protein] + ADP + H(+). May mediate extracellular signals to regulate transcription in differentiating cells. This is Shaggy-related protein kinase kappa (ASK10) from Arabidopsis thaliana (Mouse-ear cress).